The primary structure comprises 58 residues: Large ribosomal subunit protein uL30 (58 aa).

The protein belongs to the universal ribosomal protein uL30 family. In terms of assembly, part of the 50S ribosomal subunit.

The polypeptide is Large ribosomal subunit protein uL30 (Desulfovibrio desulfuricans (strain ATCC 27774 / DSM 6949 / MB)).